The primary structure comprises 369 residues: Queuine tRNA-ribosyltransferase (369 aa).

Asp89 functions as the Proton acceptor in the catalytic mechanism. Substrate is bound by residues 89-93 (DSGGF), Asp143, Gln187, and Gly214. Residues 245 to 251 (GVGTPED) are RNA binding. The active-site Nucleophile is the Asp264. The RNA binding; important for wobble base 34 recognition stretch occupies residues 269-273 (TRNAR). 4 residues coordinate Zn(2+): Cys302, Cys304, Cys307, and His333.

Belongs to the queuine tRNA-ribosyltransferase family. As to quaternary structure, homodimer. Within each dimer, one monomer is responsible for RNA recognition and catalysis, while the other monomer binds to the replacement base PreQ1. Zn(2+) is required as a cofactor.

The enzyme catalyses 7-aminomethyl-7-carbaguanine + guanosine(34) in tRNA = 7-aminomethyl-7-carbaguanosine(34) in tRNA + guanine. It participates in tRNA modification; tRNA-queuosine biosynthesis. Catalyzes the base-exchange of a guanine (G) residue with the queuine precursor 7-aminomethyl-7-deazaguanine (PreQ1) at position 34 (anticodon wobble position) in tRNAs with GU(N) anticodons (tRNA-Asp, -Asn, -His and -Tyr). Catalysis occurs through a double-displacement mechanism. The nucleophile active site attacks the C1' of nucleotide 34 to detach the guanine base from the RNA, forming a covalent enzyme-RNA intermediate. The proton acceptor active site deprotonates the incoming PreQ1, allowing a nucleophilic attack on the C1' of the ribose to form the product. After dissociation, two additional enzymatic reactions on the tRNA convert PreQ1 to queuine (Q), resulting in the hypermodified nucleoside queuosine (7-(((4,5-cis-dihydroxy-2-cyclopenten-1-yl)amino)methyl)-7-deazaguanosine). In Dechloromonas aromatica (strain RCB), this protein is Queuine tRNA-ribosyltransferase.